Consider the following 315-residue polypeptide: COMPASS component SWD3 (315 aa).

WD repeat units follow at residues 53 to 93, 94 to 133, 136 to 178, 187 to 228, 238 to 278, and 285 to 315; these read SHAR…HTFI, GHTA…LMKT, AHSE…KTLT, NGVV…RTFQ, HHSC…LLQL, and HHSS…WRWV.

Component of the Set1C/COMPASS complex which consists of SET1(2), BRE2(2), SPP1(2), SDC1(1), SHG1(1), SWD1(1), SWD2(1), and SWD3(1).

It localises to the nucleus. Its subcellular location is the chromosome. The protein resides in the telomere. Its function is as follows. The COMPASS (Set1C) complex specifically mono-, di- and trimethylates histone H3 to form H3K4me1/2/3, which subsequently plays a role in telomere length maintenance and transcription elongation regulation. COMPASS recognizes ubiquitinated H2B on one face of the nucleosome which stimulates the methylation of H3 on the opposing face. SWD3/CPS30 establishes COMPASS trimethylation activity and may also serve as the anchor point to properly tether and space the other subunits. The polypeptide is COMPASS component SWD3 (Saccharomyces cerevisiae (strain ATCC 204508 / S288c) (Baker's yeast)).